A 1446-amino-acid polypeptide reads, in one-letter code: Receptor-type tyrosine-protein phosphatase U (1446 aa).

The first 18 residues, 1 to 18 (MARAQALVLALTFQFCAP), serve as a signal peptide directing secretion. Residues 19-749 (ETETPAAGCT…QRSEEMGLIL (731 aa)) are Extracellular-facing. Residues 25-188 (AGCTFEEASD…ILLFSYPCAK (164 aa)) form the MAM domain. Residue asparagine 75 is glycosylated (N-linked (GlcNAc...) asparagine). Residues 190–275 (PHFSRLGDVE…SQAPRGAGVS (86 aa)) form the Ig-like C2-type domain. A disulfide bond links cysteine 210 and cysteine 264. Fibronectin type-III domains follow at residues 288–383 (PIAP…CAEP), 386–484 (APKG…TDED), 485–591 (VPGG…SAPS), and 592–668 (FDYA…FGAE). Asparagine 410 is a glycosylation site (N-linked (GlcNAc...) asparagine). A glycan (N-linked (GlcNAc...) asparagine) is linked at asparagine 685. Residues 750–770 (GICAGGLAVLILLLGAIIVII) form a helical membrane-spanning segment. The interval 771-887 (RKGRDRYAYS…DLLQHINQMK (117 aa)) is mediates interaction with CTNNB1. The Cytoplasmic portion of the chain corresponds to 771–1446 (RKGRDRYAYS…LEYLEALELR (676 aa)). The interval 830–867 (PGYSPRGDQRSGGVTEASSLLGGSPRRPCGRKGSPYHT) is disordered. Serine 848, serine 853, and serine 863 each carry phosphoserine. Tyrosine 865 is subject to Phosphotyrosine. Tyrosine-protein phosphatase domains are found at residues 888–1144 (TAEG…ILEA) and 1176–1439 (LREE…ALEY). Substrate-binding positions include glutamate 1053, 1085–1091 (CSAGTGR), and glutamine 1129. Cysteine 1085 serves as the catalytic Phosphocysteine intermediate. The active-site Phosphocysteine intermediate is cysteine 1380.

This sequence belongs to the protein-tyrosine phosphatase family. Receptor class 2B subfamily. Forms homooligomeric complexes which mediate cell homotypic adhesion. Interacts (via the cytoplasmic juxtamembrane domain) with CTNNB1; may mediate interaction with the cadherin/catenin adhesion complex. Interacts with KIT. May interact with AP3B1. The extracellular domain is proteolytically processed through cleavage within the fibronectin type-III 4 domain. In addition to the 190 kDa full-length protein, proteolytic products of 100 kDa, 80 kDa and 73 kDa are observed. In terms of processing, N-glycosylated. Post-translationally, phosphorylated on tyrosine residues upon activation of KIT with stem cell factor (SCF). The 73 kDa proteolytic product is not phosphorylated. As to expression, transcripts of different sizes are differentially expressed in a subset of tissues. Detected in brain, lung, skeletal muscle, heart, kidney and placenta. In brain; expressed in olfactory bulb, cerebral cortex, hippocampus and cerebellum.

The protein localises to the cell junction. It localises to the cell membrane. It catalyses the reaction O-phospho-L-tyrosyl-[protein] + H2O = L-tyrosyl-[protein] + phosphate. Its function is as follows. Tyrosine-protein phosphatase which dephosphorylates CTNNB1. Regulates CTNNB1 function both in cell adhesion and signaling. May function in cell proliferation and migration and play a role in the maintenance of epithelial integrity. May play a role in megakaryocytopoiesis. This is Receptor-type tyrosine-protein phosphatase U (Ptpru) from Mus musculus (Mouse).